Reading from the N-terminus, the 325-residue chain is uncharacterized protein (325 aa).

Residues 1 to 69 (MAMMTTTTTT…KNRRVSVTVS (69 aa)) constitute a chloroplast transit peptide. Position 70 is an N-acetylalanine (A70).

This sequence belongs to the NAD(P)-dependent epimerase/dehydratase family.

The protein localises to the plastid. It localises to the chloroplast. This is an uncharacterized protein from Arabidopsis thaliana (Mouse-ear cress).